The primary structure comprises 491 residues: Cell division control protein 1 (491 aa).

The tract at residues 1-33 (MVYRNRSKSVLSTHSKKSDDKAHYKSRSKKKSK) is disordered. The Cytoplasmic portion of the chain corresponds to 1–39 (MVYRNRSKSVLSTHSKKSDDKAHYKSRSKKKSKSRSKKR). Residues 24–33 (YKSRSKKKSK) are compositionally biased toward basic residues. A helical transmembrane segment spans residues 40–60 (LRIYWRYISIVWILWLGLISY). Topologically, residues 61–391 (YESVVVKRAM…LCYMPDPYKA (331 aa)) are extracellular. Asp-95, Asp-144, Asn-183, and His-323 together coordinate a divalent metal cation. The helical transmembrane segment at 392–412 (IRMYLWGLLFSAAFIAYMHFF) threads the bilayer. Residues 413-465 (PKSFNNRVATIMNRVFTRPDGNTSDLPLPTSISKSKSKKSLTHSKYAVNDTRS) are Cytoplasmic-facing. A helical membrane pass occupies residues 466 to 486 (IKQFLVNAIVLFVSVMPIFIY). Residues 487–491 (FYTVV) are Extracellular-facing.

The protein belongs to the metallophosphoesterase superfamily. MPPE1 family. The cofactor is a divalent metal cation.

The protein resides in the membrane. Probable metallophosphoesterase which may participate in recombinational repair of double -strand breaks. This Saccharomyces cerevisiae (strain ATCC 204508 / S288c) (Baker's yeast) protein is Cell division control protein 1 (CDC1).